Here is a 385-residue protein sequence, read N- to C-terminus: S-adenosylmethionine synthase (385 aa).

An ATP-binding site is contributed by histidine 15. Aspartate 17 contributes to the Mg(2+) binding site. Position 43 (glutamate 43) interacts with K(+). Glutamate 56 and glutamine 99 together coordinate L-methionine. A flexible loop region spans residues 99–109; that stretch reads QSPDINQGVDR. ATP-binding positions include 164 to 166, 230 to 231, aspartate 239, 245 to 246, alanine 262, and lysine 266; these read DAK, RF, and RK. Position 239 (aspartate 239) interacts with L-methionine. Lysine 270 contributes to the L-methionine binding site.

The protein belongs to the AdoMet synthase family. As to quaternary structure, homotetramer; dimer of dimers. The cofactor is Mg(2+). Requires K(+) as cofactor.

It localises to the cytoplasm. The enzyme catalyses L-methionine + ATP + H2O = S-adenosyl-L-methionine + phosphate + diphosphate. It participates in amino-acid biosynthesis; S-adenosyl-L-methionine biosynthesis; S-adenosyl-L-methionine from L-methionine: step 1/1. Functionally, catalyzes the formation of S-adenosylmethionine (AdoMet) from methionine and ATP. The overall synthetic reaction is composed of two sequential steps, AdoMet formation and the subsequent tripolyphosphate hydrolysis which occurs prior to release of AdoMet from the enzyme. This Sodalis glossinidius (strain morsitans) protein is S-adenosylmethionine synthase.